A 435-amino-acid chain; its full sequence is Elongation factor 1-alpha (435 aa).

The region spanning 4 to 229 (KPHLNLIVIG…DQLEIPPKPV (226 aa)) is the tr-type G domain. The G1 stretch occupies residues 13–20 (GHVDHGKS). A GTP-binding site is contributed by 13–20 (GHVDHGKS). S20 is a Mg(2+) binding site. Positions 69–73 (GVTIN) are G2. The interval 90–93 (DAPG) is G3. Residues 90 to 94 (DAPGH) and 152 to 155 (NKMD) each bind GTP. A G4 region spans residues 152–155 (NKMD). Residues 193-195 (VAP) form a G5 region.

The protein belongs to the TRAFAC class translation factor GTPase superfamily. Classic translation factor GTPase family. EF-Tu/EF-1A subfamily.

The protein resides in the cytoplasm. It catalyses the reaction GTP + H2O = GDP + phosphate + H(+). Functionally, GTP hydrolase that promotes the GTP-dependent binding of aminoacyl-tRNA to the A-site of ribosomes during protein biosynthesis. This is Elongation factor 1-alpha from Sulfolobus acidocaldarius (strain ATCC 33909 / DSM 639 / JCM 8929 / NBRC 15157 / NCIMB 11770).